Reading from the N-terminus, the 527-residue chain is Homeobox protein NOBOX (527 aa).

Disordered stretches follow at residues 1–126 (MEPT…DLKK), 194–245 (VEKL…DVFP), 271–306 (VTPP…RDVP), and 488–527 (ETGS…GAKE). The segment at residues 136–195 (RKKTRTLYRSDQLEELERIFQEDHYPDSDKRHEISQMVGVTPQRIMVWFQNRRAKWRKVE) is a DNA-binding region (homeobox). Residues 194–203 (VEKLNEKETK) are compositionally biased toward basic and acidic residues. Over residues 488–506 (ETGSSLSKMSDEQTSSSLE) the composition is skewed to polar residues. Residues 511–527 (EEVRDKNKNSHAAGAKE) show a composition bias toward basic and acidic residues.

In terms of tissue distribution, specifically expressed in ovaries and testes. In ovaries, expressed in oocytes from primordial through antral follicles but not in granulosa cells, theca cells and corpora lutea.

It is found in the nucleus. Transcription factor which plays an essential role in postnatal follicle development. Binds preferentially to the DNA sequences 5'-TAATTG-3', 5'-TAGTTG-3' and 5'-TAATTA-3'. Directly regulates the transcription of POU5F1 and GDF9 during early folliculogenesis. This Mus musculus (Mouse) protein is Homeobox protein NOBOX (Nobox).